The sequence spans 1092 residues: DNA polymerase delta catalytic subunit (1092 aa).

A disordered region spans residues 1-71 (MDGKRKFNGT…SRPPPPELDP (71 aa)). The Nuclear localization signal motif lies at 4–19 (KRKFNGTSNGHAKKPR). Cys997, Cys1000, Cys1014, and Cys1017 together coordinate Zn(2+). The segment at 997–1017 (CLGCKSLMPKGYEQACLCPHC) adopts a CysA-type zinc-finger fold. Residues Cys1046, Cys1049, Cys1059, and Cys1064 each coordinate [4Fe-4S] cluster. Positions 1046–1064 (CQRCQESLHEEVICSNRDC) match the CysB motif motif.

The protein belongs to the DNA polymerase type-B family. In terms of assembly, catalytic component of the DNA polymerase delta complex consisting of three subunits: the catalytic subunit PolD1 and two accessory subunits PolD2/Pol31 and PolD3/Pol32. Within the delta complex, interacts with both PolD2 and PolD3, and is able to interact with PolD2 in the absence of PolD3. Interacts with PCNA and PCNA2. Requires [4Fe-4S] cluster as cofactor. Mg(2+) is required as a cofactor. As to expression, expressed in ovaries (at the protein level). Expressed in embryos (at the protein level).

Its subcellular location is the nucleus. It localises to the nucleoplasm. It carries out the reaction DNA(n) + a 2'-deoxyribonucleoside 5'-triphosphate = DNA(n+1) + diphosphate. With respect to regulation, inhibited by KCL. Also inhibited by carbonyldiphosphonate, aphidicolin and N-ethylmaleimide (NEM). As the catalytic component of the DNA polymerase delta complex, plays a crucial role in high fidelity genome replication, including lagging strand synthesis, DNA recombination and repair. Exhibits both DNA polymerase and 3'- to 5'-exonuclease activities. Required at the nucleus of rapidly dividing embryonic cells to activate genome replication during the earliest cell cycles. Likely to require the presence of accessory proteins PolD2 and PolD3 for full activity. The protein is DNA polymerase delta catalytic subunit of Drosophila melanogaster (Fruit fly).